The primary structure comprises 302 residues: Recombination-associated protein RdgC (302 aa).

This sequence belongs to the RdgC family.

Its subcellular location is the cytoplasm. The protein resides in the nucleoid. In terms of biological role, may be involved in recombination. This chain is Recombination-associated protein RdgC, found in Xylella fastidiosa (strain M12).